The sequence spans 143 residues: Succinate dehydrogenase assembly factor 2, mitochondrial (143 aa).

Belongs to the SDHAF2 family. In terms of assembly, interacts with the flavoprotein subunit within the SDH catalytic dimer.

Its subcellular location is the mitochondrion matrix. In terms of biological role, plays an essential role in the assembly of succinate dehydrogenase (SDH), an enzyme complex (also referred to as respiratory complex II) that is a component of both the tricarboxylic acid (TCA) cycle and the mitochondrial electron transport chain, and which couples the oxidation of succinate to fumarate with the reduction of ubiquinone (coenzyme Q) to ubiquinol. Required for flavinylation (covalent attachment of FAD) of the flavoprotein subunit of the SDH catalytic dimer. This is Succinate dehydrogenase assembly factor 2, mitochondrial from Schizosaccharomyces japonicus (strain yFS275 / FY16936) (Fission yeast).